A 223-amino-acid polypeptide reads, in one-letter code: Peroxynitrite isomerase 1 (223 aa).

The GXWXGXG motif lies at 69–75 (GVWRGEG). The heme b site is built by K186 and H213.

This sequence belongs to the nitrobindin family. As to quaternary structure, homodimer. Requires heme b as cofactor.

It catalyses the reaction peroxynitrite = nitrate. The protein operates within nitrogen metabolism. Heme-binding protein able to scavenge peroxynitrite and to protect free L-tyrosine against peroxynitrite-mediated nitration, by acting as a peroxynitrite isomerase that converts peroxynitrite to nitrate. Therefore, this protein likely plays a role in peroxynitrite sensing and in the detoxification of reactive nitrogen and oxygen species (RNS and ROS, respectively). Is able to bind nitric oxide (NO) in vitro, but may act as a sensor of peroxynitrite levels in vivo. The sequence is that of Peroxynitrite isomerase 1 from Mycobacterium marinum (strain ATCC BAA-535 / M).